The sequence spans 152 residues: Troponin C (152 aa).

T1 is subject to N-acetylthreonine. 4 EF-hand domains span residues 9–44 (KQILDAKQAFCNVDKKKEGTVSCKDLGAIFKSLGLL), 45–80 (VKDDKIKDWSDEMDEEATGRLNCDAWIQLFERKLKE), 82–117 (LDERELKEAFRVLDKEKKGVIKVDVLRWILSSLGDE), and 118–152 (LTEEEIENMIAETDTDGSGTVDYEEFKCLMMSSDA). Residues D131, D133, S135, T137, and E142 each contribute to the Ca(2+) site.

This sequence belongs to the troponin C family.

In terms of biological role, troponin is the central regulatory protein of striated muscle contraction. Tn consists of three components: Tn-I which is the inhibitor of actomyosin ATPase, Tn-T which contains the binding site for tropomyosin and Tn-C. The binding of calcium to Tn-C abolishes the inhibitory action of Tn on actin filaments. The sequence is that of Troponin C from Mizuhopecten yessoensis (Japanese scallop).